Here is a 92-residue protein sequence, read N- to C-terminus: Integration host factor subunit beta (92 aa).

This sequence belongs to the bacterial histone-like protein family. In terms of assembly, heterodimer of an alpha and a beta chain.

In terms of biological role, this protein is one of the two subunits of integration host factor, a specific DNA-binding protein that functions in genetic recombination as well as in transcriptional and translational control. The chain is Integration host factor subunit beta from Azotobacter vinelandii (strain DJ / ATCC BAA-1303).